We begin with the raw amino-acid sequence, 258 residues long: uncharacterized protein (258 aa).

Residue 36-43 (GKAGTGKS) coordinates ATP.

The protein belongs to the IIV-6 075L family.

This is an uncharacterized protein from Acheta domesticus (House cricket).